We begin with the raw amino-acid sequence, 418 residues long: Histidine--tRNA ligase (418 aa).

This sequence belongs to the class-II aminoacyl-tRNA synthetase family.

Its subcellular location is the cytoplasm. It carries out the reaction tRNA(His) + L-histidine + ATP = L-histidyl-tRNA(His) + AMP + diphosphate + H(+). The chain is Histidine--tRNA ligase from Methanococcus vannielii (strain ATCC 35089 / DSM 1224 / JCM 13029 / OCM 148 / SB).